A 367-amino-acid chain; its full sequence is Polygalacturonase (367 aa).

An N-terminal signal peptide occupies residues 1–18 (MRTSFVTMLALGAAAVSA). Residues Cys34 and Cys49 are joined by a disulfide bond. PbH1 repeat units lie at residues 161-191 (ADRLTLDHITIDNSEGDAKGGHNTDAFDVGS), 192-213 (STFITISNANIKNQDDCLAINS), 214-234 (GSNIKFVGGTCSGGHGISIGS), 243-264 (VKDVTISDSTVINSDNGVRVKT), and 272-294 (VSGVTFSNIKLSNIAKYGIVIEQ). The active-site Proton donor is Asp206. A disulfide bridge links Cys208 with Cys224. Residue His228 is part of the active site. N-linked (GlcNAc...) asparagine glycosylation is found at Asn318 and Asn336. Cystine bridges form between Cys334–Cys339 and Cys358–Cys367.

This sequence belongs to the glycosyl hydrolase 28 family.

Its subcellular location is the secreted. It carries out the reaction (1,4-alpha-D-galacturonosyl)n+m + H2O = (1,4-alpha-D-galacturonosyl)n + (1,4-alpha-D-galacturonosyl)m.. The protein is Polygalacturonase (PG1) of Penicillium digitatum (Green mold).